The chain runs to 529 residues: GMP synthase [glutamine-hydrolyzing] (529 aa).

The Glutamine amidotransferase type-1 domain occupies Thr17–Asn206. The Nucleophile role is filled by Cys93. Residues His180 and Glu182 contribute to the active site. A GMPS ATP-PPase domain is found at Trp207 to Arg404. Ser235–Thr241 serves as a coordination point for ATP. XMP contacts are provided by Arg308, Asp466, Lys521, and Glu527.

Homodimer. The cofactor is Mg(2+).

It localises to the cytoplasm. Its subcellular location is the cytosol. It carries out the reaction XMP + L-glutamine + ATP + H2O = GMP + L-glutamate + AMP + diphosphate + 2 H(+). The protein operates within purine metabolism; GMP biosynthesis; GMP from XMP (L-Gln route): step 1/1. Catalyzes the conversion of xanthine monophosphate (XMP) to GMP in the presence of glutamine and ATP through an adenyl-XMP intermediate. The sequence is that of GMP synthase [glutamine-hydrolyzing] (GUA1) from Debaryomyces hansenii (strain ATCC 36239 / CBS 767 / BCRC 21394 / JCM 1990 / NBRC 0083 / IGC 2968) (Yeast).